We begin with the raw amino-acid sequence, 121 residues long: Large ribosomal subunit protein eL18 (121 aa).

Belongs to the eukaryotic ribosomal protein eL18 family.

The polypeptide is Large ribosomal subunit protein eL18 (Methanospirillum hungatei JF-1 (strain ATCC 27890 / DSM 864 / NBRC 100397 / JF-1)).